A 352-amino-acid chain; its full sequence is Protein NDRG4 (352 aa).

Phosphoserine occurs at positions 298, 317, and 323. Residues 314-323 (RTASLTSASS) show a composition bias toward low complexity. Positions 314–352 (RTASLTSASSVDGSRPQACTHSESSEGLGQVNHTMEVSC) are disordered. The span at 330-352 (QACTHSESSEGLGQVNHTMEVSC) shows a compositional bias: polar residues.

It belongs to the NDRG family. In terms of processing, phosphorylated in an aortic smooth muscle cell line, following PDGF treatment. Expressed predominantly in brain and heart (at protein level). In the brain, detected in astrocytes. Isoform 1 and isoform 2 are only expressed in brain. Isoform 3 is expressed in both heart and brain. Up-regulated in glioblastoma multiforme cells.

The protein localises to the cytoplasm. Its subcellular location is the cytosol. Functionally, contributes to the maintenance of intracerebral BDNF levels within the normal range, which is necessary for the preservation of spatial learning and the resistance to neuronal cell death caused by ischemic stress. May enhance growth factor-induced ERK1 and ERK2 phosphorylation, including that induced by PDGF and FGF. May attenuate NGF-promoted ELK1 phosphorylation in a microtubule-dependent manner. This is Protein NDRG4 (NDRG4) from Homo sapiens (Human).